The primary structure comprises 448 residues: Chromosomal replication initiator protein DnaA (448 aa).

Residues 1 to 85 (MHDNLPQIWE…EVHIVVPSEE (85 aa)) are domain I, interacts with DnaA modulators. The tract at residues 85–110 (ERVGDTQNINARRSNAQSPIMGNSPL) is domain II. Residues 111–327 (ILNPKYTFDT…GALIRIVAYS (217 aa)) are domain III, AAA+ region. G155, G157, K158, and T159 together coordinate ATP. The tract at residues 328 to 448 (SLTNSEVTVE…DAIIKELKSD (121 aa)) is domain IV, binds dsDNA.

The protein belongs to the DnaA family. As to quaternary structure, oligomerizes as a right-handed, spiral filament on DNA at oriC.

The protein resides in the cytoplasm. Its function is as follows. Plays an essential role in the initiation and regulation of chromosomal replication. ATP-DnaA binds to the origin of replication (oriC) to initiate formation of the DNA replication initiation complex once per cell cycle. Binds the DnaA box (a 9 base pair repeat at the origin) and separates the double-stranded (ds)DNA. Forms a right-handed helical filament on oriC DNA; dsDNA binds to the exterior of the filament while single-stranded (ss)DNA is stabiized in the filament's interior. The ATP-DnaA-oriC complex binds and stabilizes one strand of the AT-rich DNA unwinding element (DUE), permitting loading of DNA polymerase. After initiation quickly degrades to an ADP-DnaA complex that is not apt for DNA replication. Binds acidic phospholipids. The chain is Chromosomal replication initiator protein DnaA from Alkaliphilus metalliredigens (strain QYMF).